The following is a 151-amino-acid chain: 3-hydroxyacyl-[acyl-carrier-protein] dehydratase FabZ (151 aa).

H54 is a catalytic residue.

It belongs to the thioester dehydratase family. FabZ subfamily.

Its subcellular location is the cytoplasm. It catalyses the reaction a (3R)-hydroxyacyl-[ACP] = a (2E)-enoyl-[ACP] + H2O. Its function is as follows. Involved in unsaturated fatty acids biosynthesis. Catalyzes the dehydration of short chain beta-hydroxyacyl-ACPs and long chain saturated and unsaturated beta-hydroxyacyl-ACPs. This Pectobacterium atrosepticum (strain SCRI 1043 / ATCC BAA-672) (Erwinia carotovora subsp. atroseptica) protein is 3-hydroxyacyl-[acyl-carrier-protein] dehydratase FabZ.